Here is a 513-residue protein sequence, read N- to C-terminus: MADKAQLQEAIKTQGEVVRKLKSEKASKEQIDEEVARLLQLKAQLGGDEGKHVFVLKTAKGTRDYNPKQMAIREKVFNIIINCFKRHGAETIDSPVFELKETLTGKYGEDSKLIYDLKDQGGELLSLRYDLTVPFARYLAMNKITNIKRYHIAKVYRRDNPAMTRGRYREFYQCDFDIAGQYDAMIPDAECLKLVYEILSELDLGDFRIKVNDRRILDGMFAICGVPDEKFRTICSTVDKLDKLAWEEVKKEMVNEKGLSEEVADRIRDYVSMQGGKDLAERLLQDPKLSQSKQACAGITDMKLLFSYLELFQITDKVVFDLSLARGLDYYTGVIYEAILTQANPAPASTPAEQNGAEDAGVSVGSVAGGGRYDGLVGMFDPKGRKVPCVGVSIGIERVFSIMEQKAELSSEKVRTTETQVLVASAQKNLLEERLKLTAELWNAGIKAEVLYKKNPKLLSQLQHCEDTGIPLVAILGEQELKDGVVKLRNVASREEVDVPRAELVDEVKKRTS.

A mitochondrion-targeting transit peptide spans 1–24 (MADKAQLQEAIKTQGEVVRKLKSE). Residues 3 to 59 (DKAQLQEAIKTQGEVVRKLKSEKASKEQIDEEVARLLQLKAQLGGDEGKHVFVLKTA) enclose the WHEP-TRS domain. L-histidine is bound by residues 130-132 (DLT), Arg-157, Gln-173, Asp-177, Arg-326, and 330-331 (YY).

It belongs to the class-II aminoacyl-tRNA synthetase family.

It is found in the cytoplasm. The protein resides in the mitochondrion. The enzyme catalyses tRNA(His) + L-histidine + ATP = L-histidyl-tRNA(His) + AMP + diphosphate + H(+). Functionally, catalyzes the aminoacylation of histidyl-tRNA. The polypeptide is Histidine--tRNA ligase (Danio rerio (Zebrafish)).